Here is a 749-residue protein sequence, read N- to C-terminus: Chitin synthase G (749 aa).

A run of 5 helical transmembrane segments spans residues 40–60 (CVGELVGIFLPVMIAILPLPP), 73–93 (VLQWFAFWAFSALLIIPWLFC), 421–441 (FMQNTIRTTALLFFILAISII), 451–471 (PVGFIAVSLGLNYILMVYFGI), and 483–503 (LMFILNPFFNWLYIVYGIFTA). The tract at residues 683–749 (IESGSGIPSG…RRYMQPEQMV (67 aa)) is disordered. Residues 697 to 718 (LSSSVPQSGMQQSRAVPGNMSQ) are compositionally biased toward polar residues. Asparagine 715 carries an N-linked (GlcNAc...) asparagine glycan. Over residues 728 to 742 (YTKRPSRIPRQKRRY) the composition is skewed to basic residues.

This sequence belongs to the chitin synthase family. Class VI subfamily.

It localises to the cell membrane. It carries out the reaction [(1-&gt;4)-N-acetyl-beta-D-glucosaminyl](n) + UDP-N-acetyl-alpha-D-glucosamine = [(1-&gt;4)-N-acetyl-beta-D-glucosaminyl](n+1) + UDP + H(+). Functionally, polymerizes chitin, a structural polymer of the cell wall and septum, by transferring the sugar moiety of UDP-GlcNAc to the non-reducing end of the growing chitin polymer. Plays an important role in septal growth or maintenance. Mediates colony spore formation. The protein is Chitin synthase G of Aspergillus niger (strain ATCC MYA-4892 / CBS 513.88 / FGSC A1513).